The following is a 213-amino-acid chain: Pyrrolidone-carboxylate peptidase (213 aa).

Catalysis depends on residues Glu-78, Cys-141, and His-165.

This sequence belongs to the peptidase C15 family. As to quaternary structure, homotetramer.

The protein resides in the cytoplasm. It catalyses the reaction Release of an N-terminal pyroglutamyl group from a polypeptide, the second amino acid generally not being Pro.. In terms of biological role, removes 5-oxoproline from various penultimate amino acid residues except L-proline. The sequence is that of Pyrrolidone-carboxylate peptidase from Enterococcus faecalis (strain ATCC 700802 / V583).